The chain runs to 302 residues: tRNA-cytidine(32) 2-sulfurtransferase (302 aa).

A PP-loop motif motif is present at residues 45–50 (SGGKDS). Cys120, Cys123, and Cys211 together coordinate [4Fe-4S] cluster.

The protein belongs to the TtcA family. In terms of assembly, homodimer. The cofactor is Mg(2+). [4Fe-4S] cluster is required as a cofactor.

The protein resides in the cytoplasm. The enzyme catalyses cytidine(32) in tRNA + S-sulfanyl-L-cysteinyl-[cysteine desulfurase] + AH2 + ATP = 2-thiocytidine(32) in tRNA + L-cysteinyl-[cysteine desulfurase] + A + AMP + diphosphate + H(+). The protein operates within tRNA modification. Its function is as follows. Catalyzes the ATP-dependent 2-thiolation of cytidine in position 32 of tRNA, to form 2-thiocytidine (s(2)C32). The sulfur atoms are provided by the cysteine/cysteine desulfurase (IscS) system. This chain is tRNA-cytidine(32) 2-sulfurtransferase, found in Aeromonas salmonicida (strain A449).